A 514-amino-acid polypeptide reads, in one-letter code: Phospholipase C D (514 aa).

The tat-type signal signal peptide spans Met1 to Ala37. A disordered region spans residues Val492 to Cys514.

It belongs to the bacterial phospholipase C family. In terms of processing, predicted to be exported by the Tat system. The position of the signal peptide cleavage has not been experimentally proven.

The protein resides in the secreted. It is found in the cell wall. The catalysed reaction is a 1,2-diacyl-sn-glycero-3-phosphocholine + H2O = phosphocholine + a 1,2-diacyl-sn-glycerol + H(+). Its function is as follows. Involved in virulence. Induces cytotoxic effects on mouse macrophage cell lines, via direct or indirect enzymatic hydrolysis of cell membrane phospholipids. Hydrolyzes phosphatidylcholine. The protein is Phospholipase C D of Mycobacterium tuberculosis (strain CDC 1551 / Oshkosh).